A 167-amino-acid polypeptide reads, in one-letter code: Sperm acrosome membrane-associated protein 3 (167 aa).

The Cytoplasmic segment spans residues 1–63 (MVSALREAPL…EARSRALRRR (63 aa)). Residues 64–84 (WCPAGIILLALISLLSCLLPA) form a helical; Signal-anchor for type II membrane protein membrane-spanning segment. Residues 85–167 (SEAKVYGRCE…VPNVCQMYCS (83 aa)) are Extracellular-facing. One can recognise a C-type lysozyme domain in the interval 88 to 167 (KVYGRCELAR…VPNVCQMYCS (80 aa)). Cysteine 151 and cysteine 166 are oxidised to a cystine.

Belongs to the glycosyl hydrolase 22 family. In terms of assembly, interacts with ASTL. In terms of processing, the processed form derives from the membrane form by proteolytic processing.

It is found in the cytoplasmic vesicle. It localises to the secretory vesicle. Its subcellular location is the acrosome membrane. Functionally, sperm surface membrane protein that may be involved in sperm-egg plasma membrane adhesion and fusion during fertilization. It could be a potential receptor for the egg oligosaccharide residue N-acetylglucosamine, which is present in the extracellular matrix over the egg plasma membrane. The processed form has no detectable bacteriolytic activity in vitro. The chain is Sperm acrosome membrane-associated protein 3 (SPACA3) from Pongo pygmaeus (Bornean orangutan).